The primary structure comprises 331 residues: Putative T-box protein 36 (331 aa).

The segment at residues 29-210 (EITKKQWNQL…MNRFSRKRKY (182 aa)) is a DNA-binding region (T-box).

The protein localises to the nucleus. This is Putative T-box protein 36 (tbx-36) from Caenorhabditis elegans.